Here is a 523-residue protein sequence, read N- to C-terminus: Peptide chain release factor 3 (523 aa).

A tr-type G domain is found at 10 to 277; that stretch reads EKRRTFAIIS…SFVDLAPAPE (268 aa). Residues 19 to 26, 87 to 91, and 141 to 144 each bind GTP; these read SHPDAGKT, DTPGH, and NKLD.

This sequence belongs to the TRAFAC class translation factor GTPase superfamily. Classic translation factor GTPase family. PrfC subfamily.

It localises to the cytoplasm. Its function is as follows. Increases the formation of ribosomal termination complexes and stimulates activities of RF-1 and RF-2. It binds guanine nucleotides and has strong preference for UGA stop codons. It may interact directly with the ribosome. The stimulation of RF-1 and RF-2 is significantly reduced by GTP and GDP, but not by GMP. This chain is Peptide chain release factor 3, found in Lactobacillus acidophilus (strain ATCC 700396 / NCK56 / N2 / NCFM).